A 122-amino-acid polypeptide reads, in one-letter code: Large ribosomal subunit protein uL14 (122 aa).

This sequence belongs to the universal ribosomal protein uL14 family. In terms of assembly, part of the 50S ribosomal subunit. Forms a cluster with proteins L3 and L19. In the 70S ribosome, L14 and L19 interact and together make contacts with the 16S rRNA in bridges B5 and B8.

In terms of biological role, binds to 23S rRNA. Forms part of two intersubunit bridges in the 70S ribosome. This Pseudomonas paraeruginosa (strain DSM 24068 / PA7) (Pseudomonas aeruginosa (strain PA7)) protein is Large ribosomal subunit protein uL14.